Consider the following 150-residue polypeptide: Ribosome maturation factor RimP (150 aa).

The protein belongs to the RimP family.

Its subcellular location is the cytoplasm. Its function is as follows. Required for maturation of 30S ribosomal subunits. In Hahella chejuensis (strain KCTC 2396), this protein is Ribosome maturation factor RimP.